Reading from the N-terminus, the 422-residue chain is MTDIVDELKWRGLFAQSTDEDALRKALADGPVTFYCGFDPTAPSLHVGHLVQVLTVRRLQQAGHRPLALVGGATGQIGDPRPTAERTLNSPETVAGWVERLRGQIEPFLSFEGENAAVMVNNLDWTEGLSAIEFLRDIGKHFRVNKMLTKDSVARRLESSEGISYTEFSYQLLQAMDFLQLYRRYGCTMQQGGSDQWGNLTAGLDLLHRLEPDASVHAYATPLMTKADGTKFGKTEGGAVWLDPEMTTPYAFYQFWLNVDDRDISTYMRILSFRSRAELEELERQTEERPQARAAQRALAEELTTLVHGAGQTAAVIAASKALFGQGELAELDEATLAAALSELPHVRVAEPAPVVDLFAEVGLVASKSAARRTVKEGGAYVNNAKVTGEDAVPAKEDLLHGRWLVLRRGKKNLAAVEITGA.

L-tyrosine is bound at residue Y35. Positions 40-49 (PTAPSLHVGH) match the 'HIGH' region motif. Y170 and Q174 together coordinate L-tyrosine. Positions 231-235 (KFGKT) match the 'KMSKS' region motif. K234 provides a ligand contact to ATP. Residues 353 to 419 (APVVDLFAEV…GKKNLAAVEI (67 aa)) form the S4 RNA-binding domain.

It belongs to the class-I aminoacyl-tRNA synthetase family. TyrS type 1 subfamily. As to quaternary structure, homodimer.

The protein localises to the cytoplasm. It carries out the reaction tRNA(Tyr) + L-tyrosine + ATP = L-tyrosyl-tRNA(Tyr) + AMP + diphosphate + H(+). Functionally, catalyzes the attachment of tyrosine to tRNA(Tyr) in a two-step reaction: tyrosine is first activated by ATP to form Tyr-AMP and then transferred to the acceptor end of tRNA(Tyr). This is Tyrosine--tRNA ligase from Streptomyces coelicolor (strain ATCC BAA-471 / A3(2) / M145).